The following is a 168-amino-acid chain: Urease accessory protein UreE (168 aa).

Positions 137–168 (PESGAYHGTTGHGGGHSHSHGHSHDHHHDHSH) are disordered. Residues 151-161 (GHSHSHGHSHD) show a composition bias toward basic residues.

The protein belongs to the UreE family.

Its subcellular location is the cytoplasm. Involved in urease metallocenter assembly. Binds nickel. Probably functions as a nickel donor during metallocenter assembly. The chain is Urease accessory protein UreE from Saccharophagus degradans (strain 2-40 / ATCC 43961 / DSM 17024).